The chain runs to 429 residues: Serine--tRNA ligase (429 aa).

235–237 contacts L-serine; the sequence is TAE. An ATP-binding site is contributed by 266–268; it reads RSE. Glu-289 is a binding site for L-serine. Residue 353-356 participates in ATP binding; that stretch reads EISS. Residue Ser-389 participates in L-serine binding.

It belongs to the class-II aminoacyl-tRNA synthetase family. Type-1 seryl-tRNA synthetase subfamily. Homodimer. The tRNA molecule binds across the dimer.

It is found in the cytoplasm. The catalysed reaction is tRNA(Ser) + L-serine + ATP = L-seryl-tRNA(Ser) + AMP + diphosphate + H(+). It catalyses the reaction tRNA(Sec) + L-serine + ATP = L-seryl-tRNA(Sec) + AMP + diphosphate + H(+). It functions in the pathway aminoacyl-tRNA biosynthesis; selenocysteinyl-tRNA(Sec) biosynthesis; L-seryl-tRNA(Sec) from L-serine and tRNA(Sec): step 1/1. Functionally, catalyzes the attachment of serine to tRNA(Ser). Is also able to aminoacylate tRNA(Sec) with serine, to form the misacylated tRNA L-seryl-tRNA(Sec), which will be further converted into selenocysteinyl-tRNA(Sec). This Haemophilus influenzae (strain PittGG) protein is Serine--tRNA ligase.